Reading from the N-terminus, the 44-residue chain is MRDLKTYLSVAPVVSTIWFGALAGLLIEINRLFPDALVFPFFSF.

A helical transmembrane segment spans residues 7–27 (YLSVAPVVSTIWFGALAGLLI).

Belongs to the PsaJ family.

The protein resides in the plastid. It localises to the chloroplast thylakoid membrane. In terms of biological role, may help in the organization of the PsaE and PsaF subunits. This chain is Photosystem I reaction center subunit IX, found in Cucumis sativus (Cucumber).